The chain runs to 195 residues: Transcriptional regulator LdrP (195 aa).

An HTH crp-type domain is found at 110 to 182 (GELRARIARY…YRRVYLLDLA (73 aa)). A DNA-binding region (H-T-H motif) is located at residues 142–161 (HEEIADATASIRESVSKVLA).

As to quaternary structure, homodimer.

Activates transcription. Positively regulates PcrtB promoter upstream of the crtB operon in a cAMP-independent manner. Regulated genes include genes encoding DNA photolyase, phytoene synthase and cytochrome P450 monooxygenase, which are involved in carotenoid biosynthesis. Positively regulates the light-inducible gene cluster in the megaplasmid in a cAMP-independent manner. In Thermus thermophilus (strain ATCC 27634 / DSM 579 / HB8), this protein is Transcriptional regulator LdrP.